Here is a 282-residue protein sequence, read N- to C-terminus: NADPH-dependent 7-cyano-7-deazaguanine reductase (282 aa).

Isoleucine 88 to serine 90 contributes to the substrate binding site. Serine 90 to lysine 91 is an NADPH binding site. The active-site Thioimide intermediate is cysteine 190. Aspartate 197 functions as the Proton donor in the catalytic mechanism. Residue histidine 229–glutamate 230 coordinates substrate. Arginine 258–glycine 259 contributes to the NADPH binding site.

Belongs to the GTP cyclohydrolase I family. QueF type 2 subfamily. Homodimer.

Its subcellular location is the cytoplasm. The enzyme catalyses 7-aminomethyl-7-carbaguanine + 2 NADP(+) = 7-cyano-7-deazaguanine + 2 NADPH + 3 H(+). It functions in the pathway tRNA modification; tRNA-queuosine biosynthesis. Functionally, catalyzes the NADPH-dependent reduction of 7-cyano-7-deazaguanine (preQ0) to 7-aminomethyl-7-deazaguanine (preQ1). This Escherichia coli O157:H7 protein is NADPH-dependent 7-cyano-7-deazaguanine reductase.